Reading from the N-terminus, the 128-residue chain is UPF0102 protein Acry_2261 (128 aa).

It belongs to the UPF0102 family.

The protein is UPF0102 protein Acry_2261 of Acidiphilium cryptum (strain JF-5).